A 423-amino-acid chain; its full sequence is NADP-specific glutamate dehydrogenase (423 aa).

Residue lysine 112 is part of the active site.

This sequence belongs to the Glu/Leu/Phe/Val dehydrogenases family. Homohexamer.

It carries out the reaction L-glutamate + NADP(+) + H2O = 2-oxoglutarate + NH4(+) + NADPH + H(+). This is NADP-specific glutamate dehydrogenase (gdhA) from Saccharolobus shibatae (strain ATCC 51178 / DSM 5389 / JCM 8931 / NBRC 15437 / B12) (Sulfolobus shibatae).